Here is a 576-residue protein sequence, read N- to C-terminus: Glucoamylase ARB_02327-1 (576 aa).

Positions Met1–Ala20 are cleaved as a signal peptide. Trp141 provides a ligand contact to substrate. N-linked (GlcNAc...) asparagine glycosylation is found at Asn168 and Asn192. Catalysis depends on Asp197, which acts as the Proton acceptor. Catalysis depends on Glu200, which acts as the Proton donor. Cystine bridges form between Cys243–Cys470 and Cys285–Cys293. One can recognise a CBM20 domain in the interval Gly477–Arg576. A disordered region spans residues Thr552 to Arg576. N-linked (GlcNAc...) asparagine glycans are attached at residues Asn558 and Asn572.

This sequence belongs to the glycosyl hydrolase 15 family.

The protein localises to the secreted. It catalyses the reaction Hydrolysis of terminal (1-&gt;4)-linked alpha-D-glucose residues successively from non-reducing ends of the chains with release of beta-D-glucose.. The chain is Glucoamylase ARB_02327-1 from Schizophyllum commune (strain H4-8 / FGSC 9210) (Split gill fungus).